A 399-amino-acid chain; its full sequence is Enoyl-[acyl-carrier-protein] reductase [NADH] (399 aa).

Residues 48-53 (GASTGY), 74-75 (FE), 111-112 (DA), and 139-140 (LA) each bind NAD(+). Position 225 (Y225) interacts with substrate. Y235 (proton donor) is an active-site residue. NAD(+)-binding positions include K244 and 274-276 (VVT).

It belongs to the TER reductase family. Monomer.

The catalysed reaction is a 2,3-saturated acyl-[ACP] + NAD(+) = a (2E)-enoyl-[ACP] + NADH + H(+). The protein operates within lipid metabolism; fatty acid biosynthesis. In terms of biological role, involved in the final reduction of the elongation cycle of fatty acid synthesis (FAS II). Catalyzes the reduction of a carbon-carbon double bond in an enoyl moiety that is covalently linked to an acyl carrier protein (ACP). The sequence is that of Enoyl-[acyl-carrier-protein] reductase [NADH] from Yersinia pestis bv. Antiqua (strain Antiqua).